Consider the following 272-residue polypeptide: Polar tube protein 2 (272 aa).

Residues 1-21 form the signal peptide; it reads MLLLFTVVTLVSAAQVAPVTP. A glycan (N-linked (GlcNAc...) asparagine) is linked at Asn-134. Residues 231–272 form a disordered region; sequence RAIQKKEVKESSKDGEKSSTQNGEGTTDDEDGQQSPDGNGPE. Residues 234 to 247 are compositionally biased toward basic and acidic residues; the sequence is QKKEVKESSKDGEK. Polar residues predominate over residues 263-272; that stretch reads QQSPDGNGPE.

The protein resides in the spore polar tube. Its function is as follows. Involved in formation of a polar tube through which the infectious agent is passed on to the host cell. The polypeptide is Polar tube protein 2 (PTP2) (Encephalitozoon hellem (Microsporidian parasite)).